A 539-amino-acid chain; its full sequence is Netrin-G1 (539 aa).

The first 18 residues, 1–18 (MYLSRFLSIHALWVTVSS), serve as a signal peptide directing secretion. 3 disulfides stabilise this stretch: C33/C50, C72/C92, and C80/C88. The Laminin N-terminal domain occupies 46 to 296 (DYTACQPEST…AISDIKVRGR (251 aa)). The interval 80–91 (CAMGNPYMCNNE) is NGL discriminant loop I. The N-linked (GlcNAc...) asparagine glycan is linked to N133. C182 and C206 are oxidised to a cystine. Positions 208-214 (EEYSTGY) are NGL discriminant loop II. The interval 273–275 (EIF) is NGL discriminant loop III. Intrachain disulfides connect C297–C306, C299–C315, C317–C326, C329–C354, C364–C373, C366–C384, C387–C396, C399–C417, C420–C432, C422–C438, C440–C449, C452–C462, and C488–C497. 3 consecutive Laminin EGF-like domains span residues 297-356 (CKCN…TCIP), 364-419 (CECF…VCIE), and 420-469 (CYCN…VCDN). N-linked (GlcNAc...) asparagine glycosylation is present at N320. N406 carries an N-linked (GlcNAc...) asparagine glycan. N-linked (GlcNAc...) asparagine glycosylation is present at N433. S510 is lipidated: GPI-anchor amidated serine. The propeptide at 511–539 (ESGQGAPPRGSPALLLLTMLLGTAGPLVF) is removed in mature form.

N-glycosylated. In terms of tissue distribution, expression is restricted primarily to neurons of the CNS, particularly in the dorsal thalamus, olfactory bulb and inferior colliculus. Isoform 1A and isoform 1D are the major products in adult brain.

It localises to the cell membrane. In terms of biological role, involved in controlling patterning and neuronal circuit formation at the laminar, cellular, subcellular and synaptic levels. Promotes neurite outgrowth of both axons and dendrites. The chain is Netrin-G1 (Ntng1) from Mus musculus (Mouse).